Here is a 101-residue protein sequence, read N- to C-terminus: UPF0235 protein MmarC6_1603 (101 aa).

It belongs to the UPF0235 family.

The polypeptide is UPF0235 protein MmarC6_1603 (Methanococcus maripaludis (strain C6 / ATCC BAA-1332)).